A 378-amino-acid chain; its full sequence is Mating-type protein MAT-1 (378 aa).

The alpha box DNA-binding region spans 60–117 (KARKALNAFVGFRCYYITIPMFKPWPMKKLSNLIGLLWEADPNKSLWSLMAKPWSTIR).

It belongs to the MATALPHA1 family.

It localises to the nucleus. In terms of biological role, mating type proteins are sequence specific DNA-binding proteins that act as master switches in fungal differentiation by controlling gene expression in a cell type-specific fashion. Transcriptional activator that induces the transcription of alpha-specific genes. The chain is Mating-type protein MAT-1 (MAT1) from Cochliobolus sativus (Common root rot and spot blotch fungus).